The primary structure comprises 1331 residues: Alpha,alpha-trehalose-phosphate synthase [UDP-forming] 1 (1331 aa).

Residues 1–13 (MTDTATGVHSNAN) show a composition bias toward polar residues. Disordered regions lie at residues 1–50 (MTDT…DNDP), 71–118 (TGKE…SGQL), and 1312–1331 (PMDQ…SFGN). Residues 39-50 (DPFDRPKNDNDP) are compositionally biased toward basic and acidic residues. The segment covering 77 to 98 (LDESDDMTENEDHDEMANEDDG) has biased composition (acidic residues). Basic and acidic residues predominate over residues 102 to 112 (NEKKVETRKMD). Over residues 1318–1331 (SSTLGASLGTSFGN) the composition is skewed to polar residues.

It in the N-terminal section; belongs to the glycosyltransferase 20 family. In the C-terminal section; belongs to the gob-1 trehalose phosphatase family.

The enzyme catalyses D-glucose 6-phosphate + UDP-alpha-D-glucose = alpha,alpha-trehalose 6-phosphate + UDP + H(+). Functionally, catalyzes the production of trehalose from glucose-6-phosphate and UDP-alpha-D-glucose in a 2 step process. This Caenorhabditis elegans protein is Alpha,alpha-trehalose-phosphate synthase [UDP-forming] 1 (tps-1).